We begin with the raw amino-acid sequence, 317 residues long: Small ribosomal subunit protein RACK1 (317 aa).

WD repeat units lie at residues 15–55 (GHNG…DNQY), 64–103 (GHSH…TTQR), 106–146 (GHKG…ATLT), 148–188 (HNDW…VNAD), 191–230 (GHTG…TLYT), 232–272 (EAKA…DELK), and 281–317 (AKDP…TPSA).

It belongs to the WD repeat G protein beta family. Ribosomal protein RACK1 subfamily. In terms of assembly, component of the small ribosomal subunit. Mature ribosomes consist of a small (40S) and a large (60S) subunit. The 40S subunit contains about 32 different proteins and 1 molecule of RNA (18S). The 60S subunit contains 45 different proteins and 3 molecules of RNA (25S, 5.8S and 5S).

It localises to the cytoplasm. Its function is as follows. Component of the ribosome, a large ribonucleoprotein complex responsible for the synthesis of proteins in the cell. The small ribosomal subunit (SSU) binds messenger RNAs (mRNAs) and translates the encoded message by selecting cognate aminoacyl-transfer RNA (tRNA) molecules. The large subunit (LSU) contains the ribosomal catalytic site termed the peptidyl transferase center (PTC), which catalyzes the formation of peptide bonds, thereby polymerizing the amino acids delivered by tRNAs into a polypeptide chain. The nascent polypeptides leave the ribosome through a tunnel in the LSU and interact with protein factors that function in enzymatic processing, targeting, and the membrane insertion of nascent chains at the exit of the ribosomal tunnel. Located at the head of the 40S ribosomal subunit in the vicinity of the mRNA exit channel, it serves as a scaffold protein that can recruit other proteins to the ribosome. Involved in the negative regulation of translation of a specific subset of proteins. Plays a role in morphogenesis and pathogenesis. The polypeptide is Small ribosomal subunit protein RACK1 (Candida albicans (strain SC5314 / ATCC MYA-2876) (Yeast)).